Reading from the N-terminus, the 307-residue chain is N-acetylmuramic acid 6-phosphate etherase (307 aa).

An SIS domain is found at 59-222; the sequence is TTKALSQGGK…STGVMVRLGK (164 aa). Glutamate 87 serves as the catalytic Proton donor. Glutamate 118 is a catalytic residue.

The protein belongs to the GCKR-like family. MurNAc-6-P etherase subfamily. Homodimer.

It carries out the reaction N-acetyl-D-muramate 6-phosphate + H2O = N-acetyl-D-glucosamine 6-phosphate + (R)-lactate. Its pathway is amino-sugar metabolism; N-acetylmuramate degradation. Functionally, specifically catalyzes the cleavage of the D-lactyl ether substituent of MurNAc 6-phosphate, producing GlcNAc 6-phosphate and D-lactate. The chain is N-acetylmuramic acid 6-phosphate etherase from Trichodesmium erythraeum (strain IMS101).